The primary structure comprises 125 residues: MIELDFEKTGGLLPAICQDAETGEVLMLAFMNKESWEKTLETGMATYWSRSRQELWTKGLTSGNVQKVKEIRVDCDDDTILLKVEQIGGAACHTGHRSCFHKLVEGDKLTVVGEPVFDPKEVYKK.

Mg(2+) is bound at residue aspartate 74. Residue cysteine 75 coordinates Zn(2+). 2 residues coordinate Mg(2+): aspartate 76 and aspartate 78. Residues cysteine 92 and cysteine 99 each coordinate Zn(2+).

It belongs to the PRA-CH family. As to quaternary structure, homodimer. The cofactor is Mg(2+). Zn(2+) is required as a cofactor.

Its subcellular location is the cytoplasm. It carries out the reaction 1-(5-phospho-beta-D-ribosyl)-5'-AMP + H2O = 1-(5-phospho-beta-D-ribosyl)-5-[(5-phospho-beta-D-ribosylamino)methylideneamino]imidazole-4-carboxamide. The protein operates within amino-acid biosynthesis; L-histidine biosynthesis; L-histidine from 5-phospho-alpha-D-ribose 1-diphosphate: step 3/9. Catalyzes the hydrolysis of the adenine ring of phosphoribosyl-AMP. The protein is Phosphoribosyl-AMP cyclohydrolase of Desulfatibacillum aliphaticivorans.